A 75-amino-acid polypeptide reads, in one-letter code: MKAEIHPDYHTIKVVMTDGTEYLTRSTWGKDGDTMNLDIDSKSHPAWTGGSQQILDRGGRVSRFQKKFSGFLKKG.

The protein belongs to the bacterial ribosomal protein bL31 family. Type A subfamily. In terms of assembly, part of the 50S ribosomal subunit.

Functionally, binds the 23S rRNA. The chain is Large ribosomal subunit protein bL31 from Nitrobacter winogradskyi (strain ATCC 25391 / DSM 10237 / CIP 104748 / NCIMB 11846 / Nb-255).